Reading from the N-terminus, the 434-residue chain is Protein TolB homolog (434 aa).

The first 27 residues, methionine 1–alanine 27, serve as a signal peptide directing secretion. Residues serine 413–lysine 434 are disordered.

It belongs to the TolB family.

The protein localises to the periplasm. This is Protein TolB homolog from Chlorobaculum tepidum (strain ATCC 49652 / DSM 12025 / NBRC 103806 / TLS) (Chlorobium tepidum).